Here is a 324-residue protein sequence, read N- to C-terminus: Ribose-phosphate pyrophosphokinase 1 (324 aa).

ATP-binding positions include 39-41 (DGE) and 98-99 (RQ). Mg(2+) is bound by residues His-132 and Asp-174. Lys-197 is a catalytic residue. Residues Arg-199, Asp-223, and 227 to 231 (DTAGT) each bind D-ribose 5-phosphate.

This sequence belongs to the ribose-phosphate pyrophosphokinase family. Class I subfamily. In terms of assembly, homohexamer. Requires Mg(2+) as cofactor.

It is found in the cytoplasm. The catalysed reaction is D-ribose 5-phosphate + ATP = 5-phospho-alpha-D-ribose 1-diphosphate + AMP + H(+). It functions in the pathway metabolic intermediate biosynthesis; 5-phospho-alpha-D-ribose 1-diphosphate biosynthesis; 5-phospho-alpha-D-ribose 1-diphosphate from D-ribose 5-phosphate (route I): step 1/1. Its function is as follows. Involved in the biosynthesis of the central metabolite phospho-alpha-D-ribosyl-1-pyrophosphate (PRPP) via the transfer of pyrophosphoryl group from ATP to 1-hydroxyl of ribose-5-phosphate (Rib-5-P). The sequence is that of Ribose-phosphate pyrophosphokinase 1 from Lactococcus lactis subsp. lactis (strain IL1403) (Streptococcus lactis).